The sequence spans 85 residues: UPF0291 protein SPCG_1462 (85 aa).

Residues 62–85 are disordered; the sequence is TPEKLRQVQREKGLHGRSLDDPNS.

It belongs to the UPF0291 family.

The protein localises to the cytoplasm. This chain is UPF0291 protein SPCG_1462, found in Streptococcus pneumoniae (strain CGSP14).